Here is a 206-residue protein sequence, read N- to C-terminus: N-(5'-phosphoribosyl)anthranilate isomerase (206 aa).

It belongs to the TrpF family.

It carries out the reaction N-(5-phospho-beta-D-ribosyl)anthranilate = 1-(2-carboxyphenylamino)-1-deoxy-D-ribulose 5-phosphate. It functions in the pathway amino-acid biosynthesis; L-tryptophan biosynthesis; L-tryptophan from chorismate: step 3/5. The sequence is that of N-(5'-phosphoribosyl)anthranilate isomerase from Chlamydia caviae (strain ATCC VR-813 / DSM 19441 / 03DC25 / GPIC) (Chlamydophila caviae).